A 251-amino-acid polypeptide reads, in one-letter code: uncharacterized protein (251 aa).

A divalent metal cation-binding residues include H6, H8, E90, H130, H154, and D202.

This sequence belongs to the metallo-dependent hydrolases superfamily. TatD-type hydrolase family. It depends on a divalent metal cation as a cofactor.

This is an uncharacterized protein from Haemophilus influenzae (strain ATCC 51907 / DSM 11121 / KW20 / Rd).